The following is a 170-amino-acid chain: 2-oxo-4-hydroxy-4-carboxy-5-ureidoimidazoline decarboxylase (170 aa).

The active-site Proton donor is the H67. Substrate contacts are provided by residues P68, 84 to 88, and 119 to 123; these read SQREQ and FVLAL.

It belongs to the OHCU decarboxylase family.

The protein localises to the peroxisome. It catalyses the reaction 5-hydroxy-2-oxo-4-ureido-2,5-dihydro-1H-imidazole-5-carboxylate + H(+) = (S)-allantoin + CO2. It participates in purine metabolism; urate degradation; (S)-allantoin from urate: step 3/3. Catalyzes the stereoselective decarboxylation of 2-oxo-4-hydroxy-4-carboxy-5-ureidoimidazoline (OHCU) to (S)-allantoin. The polypeptide is 2-oxo-4-hydroxy-4-carboxy-5-ureidoimidazoline decarboxylase (URAD) (Bos taurus (Bovine)).